The chain runs to 139 residues: Probable transcription termination protein NusA (139 aa).

The KH domain maps to S97 to A139.

This sequence belongs to the NusA family.

The protein localises to the cytoplasm. Participates in transcription termination. This is Probable transcription termination protein NusA from Halococcus morrhuae (Micrococcus morrhuae).